Consider the following 151-residue polypeptide: 3-hydroxyacyl-[acyl-carrier-protein] dehydratase FabZ (151 aa).

The active site involves His-54.

The protein belongs to the thioester dehydratase family. FabZ subfamily.

The protein localises to the cytoplasm. It carries out the reaction a (3R)-hydroxyacyl-[ACP] = a (2E)-enoyl-[ACP] + H2O. Functionally, involved in unsaturated fatty acids biosynthesis. Catalyzes the dehydration of short chain beta-hydroxyacyl-ACPs and long chain saturated and unsaturated beta-hydroxyacyl-ACPs. This is 3-hydroxyacyl-[acyl-carrier-protein] dehydratase FabZ from Idiomarina loihiensis (strain ATCC BAA-735 / DSM 15497 / L2-TR).